The sequence spans 207 residues: Small ribosomal subunit protein uS4c (207 aa).

In terms of domain architecture, S4 RNA-binding spans 92 to 155; that stretch reads MRLDNILFRL…TYQSILSKRI (64 aa).

The protein belongs to the universal ribosomal protein uS4 family. In terms of assembly, part of the 30S ribosomal subunit. Contacts protein S5. The interaction surface between S4 and S5 is involved in control of translational fidelity.

The protein localises to the plastid. The protein resides in the chloroplast. Functionally, one of the primary rRNA binding proteins, it binds directly to 16S rRNA where it nucleates assembly of the body of the 30S subunit. Its function is as follows. With S5 and S12 plays an important role in translational accuracy. This chain is Small ribosomal subunit protein uS4c (rps4), found in Equisetum scirpoides (Dwarf-scouring rush).